The primary structure comprises 815 residues: Chromatin assembly factor 1 subunit FAS1 (815 aa).

Disordered regions lie at residues 1–39, 292–330, 434–477, 502–577, and 791–815; these read MDEV…TSEE, NNKE…KKQL, KLST…KKSR, QVVK…EGVQ, and RCLP…NENA. Composition is skewed to basic and acidic residues over residues 10 to 21 and 292 to 328; these read NENRKTMIEPKK and NNKE…ELKK. The stretch at 244–336 forms a coiled coil; that stretch reads EEKLLLKQLE…KKQLQVQKQA (93 aa). Acidic residues-rich tracts occupy residues 516-532 and 554-576; these read LDYE…EEAG and DDED…DEGV. The span at 806 to 815 shows a compositional bias: basic and acidic residues; sequence AAERLENENA.

This sequence belongs to the CHAF1A family. Component of the chromatin assembly factor 1 (CAF-1) complex, composed of FAS1, FAS2 and MSI1. Interacts with CYP71. As to expression, expressed in the shoot apical meristem, young leaf primordia, root tip and first lateral root primordium at the hypocotyl/root junction.

The protein resides in the nucleus. Its function is as follows. Component of the chromatin assembly factor complex (CAF-1) involved in chromatin assembly following DNA replication and DNA repair. Assembles histone octamers onto replicating DNA in vitro. Required for several aspects of development, including seedling growth and leaf hair differentiation. Plays a critical role in the organization of shoot apical meristem (SAM) and root apical meristem (RAM) during postembryonic development by facilitating stable maintenance of gene expression states. Seems not required to maintain transcriptional repression of heterochromatic genes. Involved in heterologous recombination. May repress endocycle. The chain is Chromatin assembly factor 1 subunit FAS1 (FAS1) from Arabidopsis thaliana (Mouse-ear cress).